The following is a 277-amino-acid chain: Purine nucleoside phosphorylase 2 (277 aa).

Phosphate contacts are provided by residues H65, 85–87 (RGH), and A117. E197 contacts a purine D-ribonucleoside. S216 is a binding site for phosphate. N239 serves as a coordination point for a purine D-ribonucleoside.

This sequence belongs to the PNP/MTAP phosphorylase family. As to quaternary structure, hexamer. Dimer of trimers.

It catalyses the reaction a purine D-ribonucleoside + phosphate = a purine nucleobase + alpha-D-ribose 1-phosphate. The protein operates within purine metabolism; xanthosine degradation. It functions in the pathway purine metabolism; purine nucleoside salvage. Its activity is regulated as follows. Rapidly inactivated by p-chloromercuriphenylsulfonic acid (p-CMB). Dithiothreitol incubation restores the activity. Functionally, the purine nucleoside phosphorylases catalyze the phosphorolytic breakdown of the N-glycosidic bond in the beta-(deoxy)ribonucleoside molecules, with the formation of the corresponding free purine bases and pentose-1-phosphate. This protein can degrade all purine nucleosides including xanthosine, inosine and guanosine, but cannot cleave adenosine, deoxyadenosine or hypoxanthine arabinoside. Has a preference for the neutral over the monoanionic form of xanthosine. The sequence is that of Purine nucleoside phosphorylase 2 (xapA) from Escherichia coli (strain K12).